Consider the following 95-residue polypeptide: Secreted RxLR effector protein 20 (95 aa).

The N-terminal stretch at 1 to 20 is a signal peptide; it reads MQSPYIILFALVTLLGSISG. The short motif at 47 to 50 is the RxLR element; the sequence is RLLR.

Belongs to the RxLR effector family.

The protein resides in the secreted. It is found in the host nucleus. Its subcellular location is the host cytoplasm. Functionally, secreted effector that partially suppresses the host cell death induced by cell death-inducing proteins. This chain is Secreted RxLR effector protein 20, found in Plasmopara viticola (Downy mildew of grapevine).